Consider the following 183-residue polypeptide: GTP cyclohydrolase 1 (183 aa).

Residues cysteine 71, histidine 74, and cysteine 142 each contribute to the Zn(2+) site.

The protein belongs to the GTP cyclohydrolase I family. As to quaternary structure, toroid-shaped homodecamer, composed of two pentamers of five dimers.

The enzyme catalyses GTP + H2O = 7,8-dihydroneopterin 3'-triphosphate + formate + H(+). It functions in the pathway cofactor biosynthesis; 7,8-dihydroneopterin triphosphate biosynthesis; 7,8-dihydroneopterin triphosphate from GTP: step 1/1. The chain is GTP cyclohydrolase 1 from Leptospira borgpetersenii serovar Hardjo-bovis (strain JB197).